Reading from the N-terminus, the 636-residue chain is Topoisomerase I damage affected protein 7 (636 aa).

The segment covering 1–18 has biased composition (polar residues); it reads MNSNSTIGRTTLGESDTI. Disordered stretches follow at residues 1–33, 87–109, 246–271, 299–326, and 339–362; these read MNSN…NSRS, TLVS…QYDP, NKDT…SSTN, PTSS…DDTT, and QSTT…STSP. Asn4 is a glycosylation site (N-linked (GlcNAc...) asparagine). 2 stretches are compositionally biased toward low complexity: residues 19–33 and 87–108; these read SLSF…NSRS and TLVS…SQYD. N-linked (GlcNAc...) asparagine glycosylation is present at Asn257. Residues 457-477 form a helical membrane-spanning segment; it reads IVGSVVGSVGGILICVLVVWF. A glycan (N-linked (GlcNAc...) asparagine) is linked at Asn492. Residues 510–541 show a composition bias toward polar residues; the sequence is QAKEASLQAQDSGSQQRNTETASANNPFSNEF. A disordered region spans residues 510–551; sequence QAKEASLQAQDSGSQQRNTETASANNPFSNEFNFKARGNPPP. A Glycyl lysine isopeptide (Lys-Gly) (interchain with G-Cter in ubiquitin) cross-link involves residue Lys512. Asn557, Asn562, and Asn626 each carry an N-linked (GlcNAc...) asparagine glycan. A Phosphoserine modification is found at Ser628.

It belongs to the TDA7 family.

It is found in the vacuole membrane. This Saccharomyces cerevisiae (strain ATCC 204508 / S288c) (Baker's yeast) protein is Topoisomerase I damage affected protein 7 (TDA7).